The sequence spans 495 residues: Siroheme synthase 2 (495 aa).

The precorrin-2 dehydrogenase /sirohydrochlorin ferrochelatase stretch occupies residues 1-205 (MDHYPIFLNL…GREREAEQAM (205 aa)). Residues 22-23 (ET) and 43-44 (PD) contribute to the NAD(+) site. Ser130 is subject to Phosphoserine. The segment at 220–495 (GEVYLVGAGP…HPAPADTEQA (276 aa)) is uroporphyrinogen-III C-methyltransferase. Pro229 lines the S-adenosyl-L-methionine pocket. The Proton acceptor role is filled by Asp252. The active-site Proton donor is Lys274. S-adenosyl-L-methionine contacts are provided by residues 305-307 (GGD), Ile310, 335-336 (TA), Met387, and Ala416. Positions 471-495 (FPEHGCLRGEPRPTRHPAPADTEQA) are disordered.

It in the N-terminal section; belongs to the precorrin-2 dehydrogenase / sirohydrochlorin ferrochelatase family. In the C-terminal section; belongs to the precorrin methyltransferase family.

It catalyses the reaction uroporphyrinogen III + 2 S-adenosyl-L-methionine = precorrin-2 + 2 S-adenosyl-L-homocysteine + H(+). The catalysed reaction is precorrin-2 + NAD(+) = sirohydrochlorin + NADH + 2 H(+). It carries out the reaction siroheme + 2 H(+) = sirohydrochlorin + Fe(2+). Its pathway is cofactor biosynthesis; adenosylcobalamin biosynthesis; precorrin-2 from uroporphyrinogen III: step 1/1. It functions in the pathway cofactor biosynthesis; adenosylcobalamin biosynthesis; sirohydrochlorin from precorrin-2: step 1/1. The protein operates within porphyrin-containing compound metabolism; siroheme biosynthesis; precorrin-2 from uroporphyrinogen III: step 1/1. It participates in porphyrin-containing compound metabolism; siroheme biosynthesis; siroheme from sirohydrochlorin: step 1/1. Its pathway is porphyrin-containing compound metabolism; siroheme biosynthesis; sirohydrochlorin from precorrin-2: step 1/1. Multifunctional enzyme that catalyzes the SAM-dependent methylations of uroporphyrinogen III at position C-2 and C-7 to form precorrin-2 via precorrin-1. Then it catalyzes the NAD-dependent ring dehydrogenation of precorrin-2 to yield sirohydrochlorin. Finally, it catalyzes the ferrochelation of sirohydrochlorin to yield siroheme. The protein is Siroheme synthase 2 of Halorhodospira halophila (strain DSM 244 / SL1) (Ectothiorhodospira halophila (strain DSM 244 / SL1)).